The chain runs to 434 residues: ATP phosphoribosyltransferase regulatory subunit (434 aa).

This sequence belongs to the class-II aminoacyl-tRNA synthetase family. HisZ subfamily. Heteromultimer composed of HisG and HisZ subunits.

The protein resides in the cytoplasm. The protein operates within amino-acid biosynthesis; L-histidine biosynthesis; L-histidine from 5-phospho-alpha-D-ribose 1-diphosphate: step 1/9. Required for the first step of histidine biosynthesis. May allow the feedback regulation of ATP phosphoribosyltransferase activity by histidine. This is ATP phosphoribosyltransferase regulatory subunit from Geobacter metallireducens (strain ATCC 53774 / DSM 7210 / GS-15).